Consider the following 512-residue polypeptide: Maturase K (512 aa).

This sequence belongs to the intron maturase 2 family. MatK subfamily.

It localises to the plastid. Its subcellular location is the chloroplast. Functionally, usually encoded in the trnK tRNA gene intron. Probably assists in splicing its own and other chloroplast group II introns. This chain is Maturase K, found in Amorphophallus abyssinicus (Black arum).